The sequence spans 79 residues: Sec-independent protein translocase protein TatA (79 aa).

The helical transmembrane segment at 1–21 (MGGLQPWHWVIVIAVFVLLFG) threads the bilayer. Positions 43–52 (IKEMQSEGKS) are enriched in basic and acidic residues. The segment at 43-79 (IKEMQSEGKSDNPPATPITSERVDTNPTAEQPDKRSA) is disordered.

Belongs to the TatA/E family. As to quaternary structure, the Tat system comprises two distinct complexes: a TatABC complex, containing multiple copies of TatA, TatB and TatC subunits, and a separate TatA complex, containing only TatA subunits. Substrates initially bind to the TatABC complex, which probably triggers association of the separate TatA complex to form the active translocon.

The protein resides in the cell membrane. Functionally, part of the twin-arginine translocation (Tat) system that transports large folded proteins containing a characteristic twin-arginine motif in their signal peptide across membranes. TatA could form the protein-conducting channel of the Tat system. This chain is Sec-independent protein translocase protein TatA, found in Mycobacterium sp. (strain JLS).